The primary structure comprises 293 residues: Undecaprenyl-diphosphatase (293 aa).

The next 7 membrane-spanning stretches (helical) occupy residues 57-77, 106-126, 134-154, 172-192, 212-232, 239-259, and 268-288; these read PGVS…IVYF, LAIA…KLFW, IRSL…LALA, GFVV…RSGS, FLLG…DAFA, VLPL…AIDW, and STWI…AWWL.

The protein belongs to the UppP family.

It is found in the cell inner membrane. It catalyses the reaction di-trans,octa-cis-undecaprenyl diphosphate + H2O = di-trans,octa-cis-undecaprenyl phosphate + phosphate + H(+). Its function is as follows. Catalyzes the dephosphorylation of undecaprenyl diphosphate (UPP). Confers resistance to bacitracin. This chain is Undecaprenyl-diphosphatase, found in Prochlorococcus marinus (strain MIT 9303).